Consider the following 331-residue polypeptide: Beta-ketoacyl-[acyl-carrier-protein] synthase III (331 aa).

Residues cysteine 113 and histidine 253 contribute to the active site. An ACP-binding region spans residues 254–258 (QANTR). The active site involves asparagine 283.

The protein belongs to the thiolase-like superfamily. FabH family. As to quaternary structure, homodimer.

The protein localises to the cytoplasm. The enzyme catalyses malonyl-[ACP] + acetyl-CoA + H(+) = 3-oxobutanoyl-[ACP] + CO2 + CoA. It participates in lipid metabolism; fatty acid biosynthesis. Its function is as follows. Catalyzes the condensation reaction of fatty acid synthesis by the addition to an acyl acceptor of two carbons from malonyl-ACP. Catalyzes the first condensation reaction which initiates fatty acid synthesis and may therefore play a role in governing the total rate of fatty acid production. Possesses both acetoacetyl-ACP synthase and acetyl transacylase activities. Its substrate specificity determines the biosynthesis of branched-chain and/or straight-chain of fatty acids. This chain is Beta-ketoacyl-[acyl-carrier-protein] synthase III, found in Desulfitobacterium hafniense (strain Y51).